The chain runs to 449 residues: Na(+)/H(+) antiporter NhaA 2 (449 aa).

11 helical membrane-spanning segments follow: residues 32–52, 87–107, 114–134, 145–165, 174–194, 202–222, 233–253, 318–338, 347–367, 382–402, and 417–437; these read IEATSGAVLLLATVVALTLSN, GLMTLFFFIVALEIKREVVLG, MVALSVVAAAGGMLVPMGLYL, GWGVVMPTDTAFVIGCLALLG, VFLLSLAVVDDLAAILVVAVG, TALALGAVGLVIIRGMALLGV, AIIWLAVNASGIHATIVGVIL, WVAFGVMPLFALANAGVPITI, LAVMAGFVLGKPIGVTAFAWL, WGGLVGGALLTGIGFTMALFI, and LGILAASVVSSVAGLTLLCAL.

Belongs to the NhaA Na(+)/H(+) (TC 2.A.33) antiporter family.

It is found in the cell inner membrane. The catalysed reaction is Na(+)(in) + 2 H(+)(out) = Na(+)(out) + 2 H(+)(in). In terms of biological role, na(+)/H(+) antiporter that extrudes sodium in exchange for external protons. The sequence is that of Na(+)/H(+) antiporter NhaA 2 from Acidiphilium cryptum (strain JF-5).